Consider the following 245-residue polypeptide: Carboxy-S-adenosyl-L-methionine synthase (245 aa).

S-adenosyl-L-methionine-binding positions include Tyr42, 67–69 (GCS), 92–93 (DN), 120–121 (DI), Asn135, and Arg202.

This sequence belongs to the class I-like SAM-binding methyltransferase superfamily. Cx-SAM synthase family. As to quaternary structure, homodimer.

The catalysed reaction is prephenate + S-adenosyl-L-methionine = carboxy-S-adenosyl-L-methionine + 3-phenylpyruvate + H2O. In terms of biological role, catalyzes the conversion of S-adenosyl-L-methionine (SAM) to carboxy-S-adenosyl-L-methionine (Cx-SAM). The sequence is that of Carboxy-S-adenosyl-L-methionine synthase from Vibrio vulnificus (strain YJ016).